Reading from the N-terminus, the 160-residue chain is MIKHLVAPLVFTSLILTGCQSPQGKFTPEQVAAMQSYGFTESAGDWSLGLSDAILFAKNDYKLLPESQQQIQTMAAKLASTGLTHARMDGHTDNYGEDSYNEGLSLKRANVVADAWAMGGQIPRSNLTTQGLGKKYPIASNKTAQGRAENRRVAVVITTP.

The first 18 residues, M1–G18, serve as a signal peptide directing secretion. C19 carries N-palmitoyl cysteine lipidation. C19 is lipidated: S-diacylglycerol cysteine. The OmpA-like domain occupies A43–P160.

This sequence belongs to the outer membrane OOP (TC 1.B.6) superfamily.

The protein localises to the cell membrane. This Escherichia coli (strain K12) protein is Putative lipoprotein YfiB (yfiB).